Consider the following 650-residue polypeptide: PTS system mannose-specific EIIBCA component (650 aa).

The PTS EIIB type-2 domain occupies 1–98; sequence MKLLAITSCP…PEELIQKALN (98 aa). C9 (phosphocysteine intermediate; for EIIB activity) is an active-site residue. Residues 123–456 form the PTS EIIC type-2 domain; that stretch reads IYRHLMNGVS…SLVTALFVNV (334 aa). 7 helical membrane-spanning segments follow: residues 133–153, 174–194, 199–219, 221–241, 256–276, 297–317, and 336–356; these read FMVPFIVVGGLLIAVALTLGG, IGSASFSFMIPILAGYIAYSI, GLVPGMIGGYIAATGSFYDSA, GAGFLGGIIAGFLAGYAALWI, IIIIPVFASLIVGLAFVFLIG, SSILLALILGAMISFDMGGPV, and IMGPIAVAICIPPIGLGIATF. S365 bears the Phosphoserine mark. 3 helical membrane passes run 369 to 389, 396 to 416, and 436 to 456; these read MGKAAFTMGLFGITEGAIPFA, VIPSIMAGSMTGSVIAMIGNV, and VLMFFIAVIAGSLVTALFVNV. The region spanning 504-649 is the PTS EIIA type-2 domain; that stretch reads DIISPELIEP…EEAYKLLEEI (146 aa). H566 serves as the catalytic Tele-phosphohistidine intermediate; for EIIA activity.

It localises to the cell membrane. It catalyses the reaction D-mannose(out) + N(pros)-phospho-L-histidyl-[protein] = D-mannose 6-phosphate(in) + L-histidyl-[protein]. In terms of biological role, the phosphoenolpyruvate-dependent sugar phosphotransferase system (sugar PTS), a major carbohydrate active -transport system, catalyzes the phosphorylation of incoming sugar substrates concomitantly with their translocation across the cell membrane. This system is involved in mannose transport. This is PTS system mannose-specific EIIBCA component (manP) from Bacillus subtilis (strain 168).